A 150-amino-acid polypeptide reads, in one-letter code: Large ribosomal subunit protein uL13 (150 aa).

Residues 129–150 are disordered; it reads TEHPHAAQKPQPLQLNPSASAQ. Positions 139–150 are enriched in polar residues; that stretch reads QPLQLNPSASAQ.

The protein belongs to the universal ribosomal protein uL13 family. Part of the 50S ribosomal subunit.

This protein is one of the early assembly proteins of the 50S ribosomal subunit, although it is not seen to bind rRNA by itself. It is important during the early stages of 50S assembly. This Synechococcus sp. (strain CC9605) protein is Large ribosomal subunit protein uL13.